The following is a 117-amino-acid chain: Immunoglobulin kappa variable 1-5 (117 aa).

The first 22 residues, M1–C22, serve as a signal peptide directing secretion. Positions D23–C45 are framework-1. One can recognise an Ig-like domain in the interval I24–S117. An intrachain disulfide couples C45 to C110. A complementarity-determining-1 region spans residues R46–A56. The interval W57–Y71 is framework-2. Residues K72–S78 form a complementarity-determining-2 region. Positions G79–C110 are framework-3. The complementarity-determining-3 stretch occupies residues Q111–S117.

In terms of assembly, immunoglobulins are composed of two identical heavy chains and two identical light chains; disulfide-linked.

It is found in the secreted. The protein resides in the cell membrane. In terms of biological role, v region of the variable domain of immunoglobulin light chains that participates in the antigen recognition. Immunoglobulins, also known as antibodies, are membrane-bound or secreted glycoproteins produced by B lymphocytes. In the recognition phase of humoral immunity, the membrane-bound immunoglobulins serve as receptors which, upon binding of a specific antigen, trigger the clonal expansion and differentiation of B lymphocytes into immunoglobulins-secreting plasma cells. Secreted immunoglobulins mediate the effector phase of humoral immunity, which results in the elimination of bound antigens. The antigen binding site is formed by the variable domain of one heavy chain, together with that of its associated light chain. Thus, each immunoglobulin has two antigen binding sites with remarkable affinity for a particular antigen. The variable domains are assembled by a process called V-(D)-J rearrangement and can then be subjected to somatic hypermutations which, after exposure to antigen and selection, allow affinity maturation for a particular antigen. This Homo sapiens (Human) protein is Immunoglobulin kappa variable 1-5.